The chain runs to 258 residues: L-2,3-butanediol dehydrogenase (258 aa).

NAD(+) is bound by residues 12-14, D33, Q37, 61-62, N88, Y154, K158, and 184-189; these read QGI, DV, and PGIVGT. Y154 acts as the Proton acceptor in catalysis.

The protein belongs to the short-chain dehydrogenases/reductases (SDR) family. Homotetramer.

It carries out the reaction (S,S)-butane-2,3-diol + NAD(+) = (S)-acetoin + NADH + H(+). It catalyses the reaction (S)-acetoin + NAD(+) = diacetyl + NADH + H(+). With respect to regulation, slightly activated by Ba(2+), Ca(2+), Mn(2+), Mg(2+), and Co(2+), while Hg(2+) and Cu(2+) cause marked inhibition of the activity. Ni(2+), Zn(2+) and Cd(2+) have no effect on the catalytic activity. Is also slightly inhibited by lactate, pyruvate, succinate, acetate and formate. In terms of biological role, catalyzes the reversible reduction of (S)-acetoin to (S,S)-butane-2,3-diol (L-BD) in the presence of NADH. To a lesser extent, can also catalyze the irreversible reduction of diacetyl to (S)-acetoin. Cannot oxidize meso-BD, D-BD, 2-butanol, 1,2-propanediol, ethanol, acetol, 1,2-butanediol, 1,3-butanediol, n-butanol, and n-propanol. Cannot reduce (R)-acetoin, acetol, dihydroxyacetone and 2,4-pentanedione. The protein is L-2,3-butanediol dehydrogenase of Corynebacterium glutamicum (Brevibacterium saccharolyticum).